The following is a 186-amino-acid chain: Nuclear transcription factor Y subunit B-1 (186 aa).

Residues 1–24 (MAGNKKRGGRNMDQVKKAAVRSDG) form a disordered region. The DNA-binding element occupies 34 to 40 (LPMANLV). Residues 61 to 72 (THDCAVEFVGFV) form a subunit association domain (SAD) region. The segment at 123–142 (GGNRRVAPPPPAAATPLTPG) is disordered.

This sequence belongs to the NFYB/HAP3 subunit family. As to quaternary structure, heterotrimeric transcription factor composed of three components, NF-YA, NF-YB and NF-YC. NF-YB and NF-YC must interact and dimerize for NF-YA association and DNA binding. Interacts with MADS18. Forms a ternary complex with the MADS6-MADS18 heterodimer. As to expression, expressed in developing kernels.

The protein localises to the nucleus. In terms of biological role, component of the NF-Y/HAP transcription factor complex. The NF-Y complex stimulates the transcription of various genes by recognizing and binding to a CCAAT motif in promoters. May act through association with MADS-box proteins. May regulate the expression of genes involved in flowering. The chain is Nuclear transcription factor Y subunit B-1 (NFYB1) from Oryza sativa subsp. japonica (Rice).